Here is a 583-residue protein sequence, read N- to C-terminus: 2-succinyl-5-enolpyruvyl-6-hydroxy-3-cyclohexene-1-carboxylate synthase (583 aa).

Belongs to the TPP enzyme family. MenD subfamily. As to quaternary structure, homodimer. Requires Mg(2+) as cofactor. It depends on Mn(2+) as a cofactor. The cofactor is thiamine diphosphate.

The catalysed reaction is isochorismate + 2-oxoglutarate + H(+) = 5-enolpyruvoyl-6-hydroxy-2-succinyl-cyclohex-3-ene-1-carboxylate + CO2. It functions in the pathway quinol/quinone metabolism; 1,4-dihydroxy-2-naphthoate biosynthesis; 1,4-dihydroxy-2-naphthoate from chorismate: step 2/7. Its pathway is quinol/quinone metabolism; menaquinone biosynthesis. Functionally, catalyzes the thiamine diphosphate-dependent decarboxylation of 2-oxoglutarate and the subsequent addition of the resulting succinic semialdehyde-thiamine pyrophosphate anion to isochorismate to yield 2-succinyl-5-enolpyruvyl-6-hydroxy-3-cyclohexene-1-carboxylate (SEPHCHC). This chain is 2-succinyl-5-enolpyruvyl-6-hydroxy-3-cyclohexene-1-carboxylate synthase, found in Chlorobium limicola (strain DSM 245 / NBRC 103803 / 6330).